A 62-amino-acid polypeptide reads, in one-letter code: uncharacterized protein (62 aa).

The next 2 helical transmembrane spans lie at 7 to 27 and 34 to 51; these read LLLL…VFIA and IIAS…GFTL.

It localises to the cell membrane. This is an uncharacterized protein from Bacillus subtilis (strain 168).